The sequence spans 109 residues: uncharacterized protein (109 aa).

The protein resides in the mitochondrion. This is an uncharacterized protein from Saccharomyces cerevisiae (strain ATCC 204508 / S288c) (Baker's yeast).